We begin with the raw amino-acid sequence, 27 residues long: Paragonial peptide PS-1 (27 aa).

Positions 1 to 17 (DVPSANANANNQRTAAA) are enriched in low complexity. The segment at 1 to 27 (DVPSANANANNQRTAAAKPQANAEASS) is disordered.

Main cells of the accessory glands of males (paragonial gland).

It is found in the secreted. Its function is as follows. Represses female sexual receptivity and stimulates oviposition. This peptide has a low activity. This is Paragonial peptide PS-1 (PapC) from Drosophila funebris (Fruit fly).